A 31-amino-acid chain; its full sequence is MLTITSYFGFLLAALTITSVLFIGLSKIRLI.

A helical membrane pass occupies residues 4-24 (ITSYFGFLLAALTITSVLFIG).

Belongs to the PetL family. In terms of assembly, the 4 large subunits of the cytochrome b6-f complex are cytochrome b6, subunit IV (17 kDa polypeptide, PetD), cytochrome f and the Rieske protein, while the 4 small subunits are PetG, PetL, PetM and PetN. The complex functions as a dimer.

The protein resides in the plastid. It is found in the chloroplast thylakoid membrane. In terms of biological role, component of the cytochrome b6-f complex, which mediates electron transfer between photosystem II (PSII) and photosystem I (PSI), cyclic electron flow around PSI, and state transitions. PetL is important for photoautotrophic growth as well as for electron transfer efficiency and stability of the cytochrome b6-f complex. The chain is Cytochrome b6-f complex subunit 6 from Arabidopsis thaliana (Mouse-ear cress).